Here is a 104-residue protein sequence, read N- to C-terminus: UPF0145 protein VNG_2432C (104 aa).

It belongs to the UPF0145 family.

In Halobacterium salinarum (strain ATCC 700922 / JCM 11081 / NRC-1) (Halobacterium halobium), this protein is UPF0145 protein VNG_2432C.